We begin with the raw amino-acid sequence, 259 residues long: Adenosylcobinamide-GDP ribazoletransferase (259 aa).

A run of 7 helical transmembrane segments spans residues 41-61 (AAIW…AIVF), 67-87 (FGLA…IATG), 119-139 (IGAY…NVLS), 148-168 (LFAL…FMHL), 179-199 (AGAG…GAIP), 200-220 (LLLL…LLFA), and 237-257 (TIGA…SVAL).

This sequence belongs to the CobS family. It depends on Mg(2+) as a cofactor.

The protein resides in the cell inner membrane. It catalyses the reaction alpha-ribazole + adenosylcob(III)inamide-GDP = adenosylcob(III)alamin + GMP + H(+). The enzyme catalyses alpha-ribazole 5'-phosphate + adenosylcob(III)inamide-GDP = adenosylcob(III)alamin 5'-phosphate + GMP + H(+). Its pathway is cofactor biosynthesis; adenosylcobalamin biosynthesis; adenosylcobalamin from cob(II)yrinate a,c-diamide: step 7/7. In terms of biological role, joins adenosylcobinamide-GDP and alpha-ribazole to generate adenosylcobalamin (Ado-cobalamin). Also synthesizes adenosylcobalamin 5'-phosphate from adenosylcobinamide-GDP and alpha-ribazole 5'-phosphate. The sequence is that of Adenosylcobinamide-GDP ribazoletransferase from Mesorhizobium japonicum (strain LMG 29417 / CECT 9101 / MAFF 303099) (Mesorhizobium loti (strain MAFF 303099)).